A 1720-amino-acid chain; its full sequence is TOG array regulator of axonemal microtubules protein 1 (1720 aa).

TOG stretches follow at residues 94–312 and 352–596; these read EEDT…RRLE and PQEL…MPSS. HEAT repeat units lie at residues 175–212, 214–247, 251–289, 345–384, 390–427, 431–466, 467–504, and 506–543; these read AFSL…RSPG, VLRT…TEDL, LDLT…RLGQ, NLKF…KFNP, SSLV…RLGE, QFLG…MKEV, GPQQ…YPSE, and FDLP…SMGS. Composition is skewed to polar residues over residues 794 to 809, 819 to 829, 842 to 852, and 868 to 877; these read FGSQ…QNPS, PVSSPRTSPKH, DNSVNFSNSWP, and LVSQKSSDPT. Disordered regions lie at residues 794–924, 970–998, and 1067–1087; these read FGSQ…SLLP, HSSL…ESPD, and KKIS…NPQQ. Positions 1073 to 1087 are enriched in polar residues; that stretch reads AEQSPSAGSSSNPQQ. A TOG 3 region spans residues 1256-1425; it reads EIALTEALRL…YIKDSVRNLQ (170 aa). HEAT repeat units lie at residues 1294 to 1331 and 1335 to 1372; these read TKLH…YLKK and QELD…NVTP. The tract at residues 1430 to 1462 is disordered; the sequence is GEIPLDTPSAKGRRSHTGSVGNTRSSSVSRDAF. Positions 1446–1458 are enriched in polar residues; it reads TGSVGNTRSSSVS. The interval 1484–1720 is TOG 4; the sequence is SLESAEYLKL…LLDMTILNEL (237 aa). HEAT repeat units follow at residues 1485–1522, 1526–1563, and 1567–1605; these read LESA…NNQD, GNIV…LLRD, and PIIN…HVDN.

It belongs to the Crescerin family. As to quaternary structure, interacts with ARMC9, CCDC66, CEP104 and CSPP1.

It is found in the cell projection. The protein localises to the cilium. The protein resides in the cytoplasm. Its subcellular location is the cytoskeleton. It localises to the cilium axoneme. Functionally, involved in ciliogenesis. It is required for appropriate acetylation and polyglutamylation of ciliary microtubules, and regulation of cilium length. Interacts with microtubules and promotes microtubule polymerization via its HEAT repeat domains, especially those in TOG region 2 and 4. In Homo sapiens (Human), this protein is TOG array regulator of axonemal microtubules protein 1.